The sequence spans 369 residues: Flagellar P-ring protein (369 aa).

An N-terminal signal peptide occupies residues 1 to 22 (MIKLKQLIAATLLLSAAFGAHA).

Belongs to the FlgI family. The basal body constitutes a major portion of the flagellar organelle and consists of four rings (L,P,S, and M) mounted on a central rod.

It is found in the periplasm. The protein localises to the bacterial flagellum basal body. Functionally, assembles around the rod to form the L-ring and probably protects the motor/basal body from shearing forces during rotation. The protein is Flagellar P-ring protein of Pseudomonas syringae pv. tomato (strain ATCC BAA-871 / DC3000).